The following is a 432-amino-acid chain: Adenosine 3'-phospho 5'-phosphosulfate transporter 1 (432 aa).

Transmembrane regions (helical) follow at residues 5 to 25, 40 to 60, 109 to 129, 154 to 174, 238 to 258, 265 to 285, 299 to 319, 353 to 373, and 387 to 407; these read WWAV…ETPE, VVNA…VQYF, ALKL…WGVL, FLVL…CVLC, WEYL…LSSG, PATT…DSFT, SVQM…GSLL, LFIF…IMTL, and GHTV…ALLL. Residue Ser427 is modified to Phosphoserine.

It belongs to the nucleotide-sugar transporter family. SLC35B subfamily.

It localises to the golgi apparatus membrane. The enzyme catalyses 3'-phosphoadenylyl sulfate(in) + adenosine 3',5'-bisphosphate(out) = 3'-phosphoadenylyl sulfate(out) + adenosine 3',5'-bisphosphate(in). Probably functions as a 3'-phosphoadenylyl sulfate:adenosine 3',5'-bisphosphate antiporter at the Golgi membranes. Mediates the transport from the cytosol into the lumen of the Golgi of 3'-phosphoadenylyl sulfate/adenosine 3'-phospho 5'-phosphosulfate (PAPS), a universal sulfuryl donor for sulfation events that take place in that compartment. In Pongo abelii (Sumatran orangutan), this protein is Adenosine 3'-phospho 5'-phosphosulfate transporter 1.